Consider the following 701-residue polypeptide: Elongation factor G (701 aa).

The tr-type G domain occupies 11–287 (TKVRNIGIMA…AVIDYLPSPL (277 aa)). GTP contacts are provided by residues 20–27 (AHIDAGKT), 84–88 (DTPGH), and 138–141 (NKMD).

The protein belongs to the TRAFAC class translation factor GTPase superfamily. Classic translation factor GTPase family. EF-G/EF-2 subfamily.

The protein resides in the cytoplasm. In terms of biological role, catalyzes the GTP-dependent ribosomal translocation step during translation elongation. During this step, the ribosome changes from the pre-translocational (PRE) to the post-translocational (POST) state as the newly formed A-site-bound peptidyl-tRNA and P-site-bound deacylated tRNA move to the P and E sites, respectively. Catalyzes the coordinated movement of the two tRNA molecules, the mRNA and conformational changes in the ribosome. The sequence is that of Elongation factor G from Mycobacterium leprae (strain Br4923).